We begin with the raw amino-acid sequence, 755 residues long: Thermostable beta-glucosidase B (755 aa).

The active site involves Asp231.

Belongs to the glycosyl hydrolase 3 family.

It catalyses the reaction Hydrolysis of terminal, non-reducing beta-D-glucosyl residues with release of beta-D-glucose.. Its pathway is glycan metabolism; cellulose degradation. The protein is Thermostable beta-glucosidase B (bglB) of Acetivibrio thermocellus (strain ATCC 27405 / DSM 1237 / JCM 9322 / NBRC 103400 / NCIMB 10682 / NRRL B-4536 / VPI 7372) (Clostridium thermocellum).